The sequence spans 152 residues: Regulatory protein RecX (152 aa).

It belongs to the RecX family.

It is found in the cytoplasm. In terms of biological role, modulates RecA activity. This is Regulatory protein RecX from Haemophilus influenzae (strain 86-028NP).